A 687-amino-acid chain; its full sequence is Transketolase 2 (687 aa).

His47 serves as a coordination point for substrate. Residues His87 and 135–137 (GPL) contribute to the thiamine diphosphate site. Asp176 contributes to the Mg(2+) binding site. Thiamine diphosphate contacts are provided by Gly177 and Asn206. 2 residues coordinate Mg(2+): Asn206 and Ile208. Positions 282, 379, and 406 each coordinate substrate. Residue His282 coordinates thiamine diphosphate. Glu432 serves as the catalytic Proton donor. Position 458 (Phe458) interacts with thiamine diphosphate. 4 residues coordinate substrate: His482, Asp490, His494, and Arg541.

It belongs to the transketolase family. Mg(2+) serves as cofactor. It depends on thiamine diphosphate as a cofactor.

It carries out the reaction D-sedoheptulose 7-phosphate + D-glyceraldehyde 3-phosphate = aldehydo-D-ribose 5-phosphate + D-xylulose 5-phosphate. With respect to regulation, activity is increased sixfold following autotrophic growth on methanol compared with that of heterotrophically grown cells. Catalyzes the transfer of a two-carbon ketol group from a ketose donor to an aldose acceptor, via a covalent intermediate with the cofactor thiamine pyrophosphate. The polypeptide is Transketolase 2 (Xanthobacter flavus).